The primary structure comprises 350 residues: UBX domain-containing protein 2B (350 aa).

Over residues 1–29 (MEERENSEEGDDGAGEEEEEDQGSGEDGG) the composition is skewed to acidic residues. Residues 1–46 (MEERENSEEGDDGAGEEEEEDQGSGEDGGEVGAEREQEAELKDSLR) form a disordered region. Residues 32–45 (GAEREQEAELKDSL) show a composition bias toward basic and acidic residues. Residues 160–225 (EIQILLKLWS…MEDHQDQEYI (66 aa)) form the SEP domain. Residues 271–348 (EHVPTTKIQI…DILNTVILQR (78 aa)) form the UBX domain.

Belongs to the NSFL1C family.

It localises to the nucleus. Its subcellular location is the cytoplasm. The protein localises to the cytosol. It is found in the endoplasmic reticulum. The protein resides in the golgi apparatus. It localises to the cytoskeleton. Its subcellular location is the microtubule organizing center. The protein localises to the centrosome. Functionally, adapter protein required for Golgi and endoplasmic reticulum biogenesis. Involved in Golgi and endoplasmic reticulum maintenance during interphase and in their reassembly at the end of mitosis. Regulates the centrosomal levels of kinase aurka-a/Aurora A during mitotic progression by promoting aurka-a removal from centrosomes in prophase. Also, regulates spindle orientation during mitosis. This chain is UBX domain-containing protein 2B (ubxn2b), found in Xenopus laevis (African clawed frog).